Here is a 140-residue protein sequence, read N- to C-terminus: Nucleoside triphosphatase NudI (140 aa).

The Nudix hydrolase domain maps to 1 to 140 (MRHRTIVCPL…RVTLSLKGLL (140 aa)). A Nudix box motif is present at residues 38-58 (GVEPGERIEEALRREIREELG).

The protein belongs to the Nudix hydrolase family. NudI subfamily. As to quaternary structure, monomer. Mg(2+) serves as cofactor.

The catalysed reaction is a ribonucleoside 5'-triphosphate + H2O = a ribonucleoside 5'-phosphate + diphosphate + H(+). The enzyme catalyses a 2'-deoxyribonucleoside 5'-triphosphate + H2O = a 2'-deoxyribonucleoside 5'-phosphate + diphosphate + H(+). It catalyses the reaction dUTP + H2O = dUMP + diphosphate + H(+). It carries out the reaction dTTP + H2O = dTMP + diphosphate + H(+). The catalysed reaction is dCTP + H2O = dCMP + diphosphate + H(+). Its function is as follows. Catalyzes the hydrolysis of nucleoside triphosphates, with a preference for pyrimidine deoxynucleoside triphosphates (dUTP, dTTP and dCTP). The polypeptide is Nucleoside triphosphatase NudI (Klebsiella pneumoniae subsp. pneumoniae (strain ATCC 700721 / MGH 78578)).